A 591-amino-acid chain; its full sequence is ATPase family AAA domain-containing protein 3A (591 aa).

The segment at 1 to 52 is disordered; the sequence is MSWLFGIKGPKGEGTGPPLPLPPAQPGAESGGDRGAGDRPSPKDKWSNFDPT. Position 2 is an N-acetylserine (Ser-2). Residues 2–49 are required for interaction with the inner surface of the mitochondrial outer membrane; the sequence is SWLFGIKGPKGEGTGPPLPLPPAQPGAESGGDRGAGDRPSPKDKWSNF. Residues 2-245 lie on the Mitochondrial intermembrane side of the membrane; sequence SWLFGIKGPK…FRAFVTDWDK (244 aa). Residues 31–47 show a composition bias toward basic and acidic residues; that stretch reads GGDRGAGDRPSPKDKWS. Positions 55–216 form a coiled coil; the sequence is ERAAKAAREL…REQIRLKAAE (162 aa). The chain crosses the membrane as a helical span at residues 246-263; it reads VTATVAGLTLLAVGVYSA. Over 264-591 the chain is Mitochondrial matrix; it reads KNATSVAGRY…KPPHPSLLSC (328 aa). Residues 289-304 form an S100B-binding region; that stretch reads RISVLEALRHPIQVSR. Residue 351–358 participates in ATP binding; sequence GPPGTGKT. Lys-490 carries the N6-acetyllysine; alternate modification. Lys-490 is modified (N6-succinyllysine; alternate). N6-acetyllysine is present on residues Lys-494 and Lys-512.

It belongs to the AAA ATPase family. As to quaternary structure, can form homooligomers. Homodimer formation at the N-terminus may be regulated by ATP and is required for the interaction with the inner surface of the mitochondrial outer membrane and correct mitochondrial homeostasis. Interacts with components of the mitochondrial ribosome and with other proteins involved in mitochondrial RNA metabolism. May also interact with protein involved in lipid metabolism, including STARD9. May interact with FAM210A. Interacts with GADD45GIP1. Interacts with S100B in a Ca(+2)- and Zn(+2)-dependent manner; this interaction probably occurs in the cytosol prior to mitochondrial targeting. S100B could assist ATAD3A cytoplasmic processing, preventing aggregation and favoring mitochondrial localization. Interacts with HSP60/HSPD1. Interacts with CLPB. Interacts with EIF2AK3/PERK; ATAD3A and EIF2S1/eIF-2-alpha occupy a common binding site within the cytoplasmic loop of EIF2AK3/PERK, leading to prevent EIF2AK3/PERK association with its substrate EIF2S1/eIF-2-alpha.

The protein resides in the mitochondrion inner membrane. It localises to the mitochondrion matrix. Its subcellular location is the mitochondrion nucleoid. The enzyme catalyses ATP + H2O = ADP + phosphate + H(+). Essential for mitochondrial network organization, mitochondrial metabolism and cell growth at organism and cellular level. May play an important role in mitochondrial protein synthesis. May also participate in mitochondrial DNA replication. May bind to mitochondrial DNA D-loops and contribute to nucleoid stability. Required for enhanced channeling of cholesterol for hormone-dependent steroidogenesis. Involved in mitochondrial-mediated antiviral innate immunity. Required to protect mitochondria from the PERK-mediated unfolded protein response: specifically inhibits the activity of EIF2AK3/PERK at mitochondria-endoplasmic reticulum contact sites, thereby providing a safe haven for mitochondrial protein translation during endoplasmic reticulum stress. Ability to inhibit EIF2AK3/PERK is independent of its ATPase activity. Also involved in the mitochondrial DNA damage response by promoting signaling between damaged genomes and the mitochondrial membrane, leading to activation of the integrated stress response (ISR). In Rattus norvegicus (Rat), this protein is ATPase family AAA domain-containing protein 3A (Atad3a).